The primary structure comprises 230 residues: Small ribosomal subunit protein uS3 (230 aa).

Residues 39–107 (VRKFLVEKLQ…PAQINIAEIR (69 aa)) form the KH type-2 domain.

Belongs to the universal ribosomal protein uS3 family. In terms of assembly, part of the 30S ribosomal subunit. Forms a tight complex with proteins S10 and S14.

In terms of biological role, binds the lower part of the 30S subunit head. Binds mRNA in the 70S ribosome, positioning it for translation. This is Small ribosomal subunit protein uS3 from Shewanella baltica (strain OS223).